A 397-amino-acid polypeptide reads, in one-letter code: Argininosuccinate synthase (397 aa).

Position 8–16 (8–16) interacts with ATP; that stretch reads AYSGGLDTS. L-citrulline is bound by residues Tyr-86 and Ser-91. Gly-116 serves as a coordination point for ATP. The L-aspartate site is built by Thr-118, Asn-122, and Asp-123. Residue Asn-122 participates in L-citrulline binding. 5 residues coordinate L-citrulline: Arg-126, Ser-175, Ser-184, Glu-260, and Tyr-272.

Belongs to the argininosuccinate synthase family. Type 1 subfamily. Homotetramer.

Its subcellular location is the cytoplasm. It catalyses the reaction L-citrulline + L-aspartate + ATP = 2-(N(omega)-L-arginino)succinate + AMP + diphosphate + H(+). The protein operates within amino-acid biosynthesis; L-arginine biosynthesis; L-arginine from L-ornithine and carbamoyl phosphate: step 2/3. This Clostridium botulinum (strain Kyoto / Type A2) protein is Argininosuccinate synthase.